A 341-amino-acid polypeptide reads, in one-letter code: UDP-3-O-acylglucosamine N-acyltransferase (341 aa).

Histidine 255 acts as the Proton acceptor in catalysis.

This sequence belongs to the transferase hexapeptide repeat family. LpxD subfamily. As to quaternary structure, homotrimer.

The enzyme catalyses a UDP-3-O-[(3R)-3-hydroxyacyl]-alpha-D-glucosamine + a (3R)-hydroxyacyl-[ACP] = a UDP-2-N,3-O-bis[(3R)-3-hydroxyacyl]-alpha-D-glucosamine + holo-[ACP] + H(+). Its pathway is bacterial outer membrane biogenesis; LPS lipid A biosynthesis. Its function is as follows. Catalyzes the N-acylation of UDP-3-O-acylglucosamine using 3-hydroxyacyl-ACP as the acyl donor. Is involved in the biosynthesis of lipid A, a phosphorylated glycolipid that anchors the lipopolysaccharide to the outer membrane of the cell. This Granulibacter bethesdensis (strain ATCC BAA-1260 / CGDNIH1) protein is UDP-3-O-acylglucosamine N-acyltransferase.